Consider the following 724-residue polypeptide: Solute carrier organic anion transporter family member 4C1 (724 aa).

Topologically, residues 1-105 are cytoplasmic; that stretch reads MKSAKGIENL…QCLQRCNTPG (105 aa). Phosphoserine occurs at positions 15, 16, 24, 26, and 28. Residues 30–71 form a disordered region; the sequence is IEVSALSSDPQRENSQPQELQKPQEPQKSPEPSLPSAPPNVS. Residues 44–60 show a composition bias toward low complexity; the sequence is SQPQELQKPQEPQKSPE. A helical membrane pass occupies residues 106–126; it reads GFLLHYCLLAVTQGIVVNGLV. At 127–145 the chain is on the extracellular side; sequence NISISTVEKRYEMKSSLTG. The chain crosses the membrane as a helical span at residues 146 to 166; that stretch reads LISSSYDISFCLLSLFVSFFG. Topologically, residues 167 to 172 are cytoplasmic; the sequence is ERGHKP. The helical transmembrane segment at 173 to 197 threads the bilayer; the sequence is RWLAFAAFMIGLGALVFSLPQFFSG. Over 198–223 the chain is Extracellular; the sequence is EYKLGSLFEDTCVTTRNSTSCTSSTS. A helical transmembrane segment spans residues 224–254; that stretch reads SLSNYLYVFILGQLLLGAGGTPLYTLGTAFL. The Cytoplasmic segment spans residues 255 to 274; sequence DDSVPTHKSSLYIGTGYAMS. The helical transmembrane segment at 275 to 295 threads the bilayer; the sequence is ILGPAIGYVLGGQLLTIYIDV. The Extracellular portion of the chain corresponds to 296 to 311; sequence AMGESTDVTEDDPRWL. Residues 312–336 traverse the membrane as a helical segment; that stretch reads GAWWIGFLLSWIFAWSLIIPFSCFP. The Cytoplasmic segment spans residues 337-377; it reads KHLPGTAEIQAGKTSQAHQSNSNADVKFGKSIKDFPAALKN. The chain crosses the membrane as a helical span at residues 378–399; it reads LMKNAVFMCLVLSTSSEALITT. Over 400–419 the chain is Extracellular; that stretch reads GFATFLPKFIENQFGLTSSF. Residues 420–443 form a helical membrane-spanning segment; the sequence is AATLGGAVLIPGAALGQILGGFLV. The Cytoplasmic portion of the chain corresponds to 444 to 447; sequence SKFR. Residues 448 to 471 form a helical membrane-spanning segment; sequence MTCKNTMKFALFTSGVALTLSFVF. Topologically, residues 472 to 580 are extracellular; the sequence is MYAKCENEPF…ETHCAKLPIF (109 aa). Positions 495–549 constitute a Kazal-like domain; sequence GNLIAPCNANCNCSRSYYYPVCGDGVQYFSPCFAGCSNPVAHRKPKVYYNCSCIE. Intrachain disulfides connect Cys-501-Cys-530, Cys-507-Cys-526, and Cys-516-Cys-547. Residues 581–603 form a helical membrane-spanning segment; it reads LCIFFIVIIFTFMAGTPITVSIL. The Cytoplasmic portion of the chain corresponds to 604–612; sequence RCVNHRQRS. Residues 613–638 form a helical membrane-spanning segment; the sequence is LALGIQFMVLRLLGTIPGPIIFGFTI. Over 639 to 672 the chain is Extracellular; it reads DSTCILWDINDCGIKGACWIYDNIKMAHMLVAIS. The helical transmembrane segment at 673–690 threads the bilayer; that stretch reads VTCKVITMFFNGFAIFLY. At 691-724 the chain is on the cytoplasmic side; sequence KPPPSATDVSFHKENAVVTNVLAEQDLNKIVKEG.

This sequence belongs to the organo anion transporter (TC 2.A.60) family. Predominantly expressed in kidney but also weakly expressed in both fetal liver and kidney.

The protein localises to the basolateral cell membrane. The catalysed reaction is estrone 3-sulfate(out) = estrone 3-sulfate(in). It catalyses the reaction L-thyroxine(out) = L-thyroxine(in). The enzyme catalyses 3,3',5-triiodo-L-thyronine(out) = 3,3',5-triiodo-L-thyronine(in). It carries out the reaction chenodeoxycholate(out) = chenodeoxycholate(in). The catalysed reaction is glycocholate(out) = glycocholate(in). It catalyses the reaction L-homoarginine(in) = L-homoarginine(out). The enzyme catalyses L-arginine(in) = L-arginine(out). It carries out the reaction N(omega),N(omega)-dimethyl-L-arginine(out) = N(omega),N(omega)-dimethyl-L-arginine(in). Its function is as follows. Mediates the transport of organic anions such as steroids (estrone 3-sulfate, chenodeoxycholate, glycocholate) and thyroid hormones (3,3',5-triiodo-L-thyronine (T3), L-thyroxine (T4)), in the kidney. Capable of transporting cAMP and pharmacological substances such as digoxin, ouabain and methotrexate. Transport is independent of sodium, chloride ion, and ATP. Transport activity is stimulated by an acidic extracellular environment due to increased substrate affinity to the transporter. The driving force for this transport activity is currently not known. The role of hydrogencarbonate (HCO3(-), bicarbonate) as the probable counteranion that exchanges for organic anions is still not well defined. Functions as an uptake transporter at the apical membrane, suggesting a role in renal reabsorption. Involved in the renal secretion of the uremic toxin ADMA (N(omega),N(omega)-dimethyl-L-arginine or asymmetrical dimethylarginine), which is associated to cardiovascular events and mortality, and the structurally related amino acids L-arginine and L-homoarginine (a cardioprotective biomarker). Can act bidirectionally, suggesting a dual protective role of this transport protein; exporting L-homoarginine after being synthesized in proximal tubule cells, and mediating uptake of ADMA from the blood into proximal tubule cells where it is degraded by the enzyme dimethylarginine dimethylaminohydrolase 1 (DDAH1). May be involved in sperm maturation by enabling directed movement of organic anions and compounds within or between cells. This ion-transporting process is important to maintain the strict epididymal homeostasis necessary for sperm maturation. May have a role in secretory functions since seminal vesicle epithelial cells are assumed to secrete proteins involved in decapacitation by modifying surface proteins to facilitate the acquisition of the ability to fertilize the egg. The chain is Solute carrier organic anion transporter family member 4C1 from Homo sapiens (Human).